We begin with the raw amino-acid sequence, 362 residues long: Snurportin-1 (362 aa).

Met-1 is subject to N-acetylmethionine. Disordered regions lie at residues 1 to 40 (MEELSQALAGSFSVSQDLNSTAAPHPRLSQYKSKYSSLEQ) and 69 to 90 (DWTGMESEEEEEKKDDEEMDVD). The tract at residues 1-65 (MEELSQALAG…LDYVNHARRL (65 aa)) is necessary for interaction with KPNB1 and m3G-cap U1 and U5 snRNP import receptor activity. The interval 1–160 (MEELSQALAG…NTFPSLLPGG (160 aa)) is necessary for interaction with XPO1. Positions 11-73 (SFSVSQDLNS…RLAEDDWTGM (63 aa)) constitute an IBB domain. The span at 12 to 22 (FSVSQDLNSTA) shows a compositional bias: polar residues. Over residues 69–89 (DWTGMESEEEEEKKDDEEMDV) the composition is skewed to acidic residues. Ser-75 carries the phosphoserine modification. Residues 128–130 (GKR) form an interaction with m3G-cap structure region. The necessary for binding to the m3G-cap structure stretch occupies residues 210–330 (LHSKLPEEEG…GIMGKLTPRA (121 aa)). The tract at residues 319–362 (KEGIMGKLTPRASENGHYELEHLSTPKLKSPPQRPNHPESLMEN) is disordered. A compositionally biased stretch (basic and acidic residues) spans 332–342 (ENGHYELEHLS).

The protein belongs to the snurportin family. Component of an import snRNP complex composed of KPNB1, SNUPN, SMN1 and ZNF259. Component of a nuclear export receptor complex composed of KPNB1, Ran, SNUPN and XPO1. Found in a trimeric export complex with SNUPN, Ran and XPO1. Interacts (via IBB domain) with KPNB1; the interaction is direct. Interacts with DDX20, IPO7, SMN1, SNRPB and XPO1. Interacts directly with XPO1. Its interaction with XPO1 and binding to m3G-cap U snRNPs appears to be mutually exclusive. Can form homomers.

The protein resides in the nucleus. It is found in the cytoplasm. Functions as an U snRNP-specific nuclear import adapter. Involved in the trimethylguanosine (m3G)-cap-dependent nuclear import of U snRNPs. Binds specifically to the terminal m3G-cap U snRNAs. In Bos taurus (Bovine), this protein is Snurportin-1 (SNUPN).